Here is a 256-residue protein sequence, read N- to C-terminus: Thiazole synthase (256 aa).

The active-site Schiff-base intermediate with DXP is Lys-96. Residues Gly-157, 184-185, and 206-207 contribute to the 1-deoxy-D-xylulose 5-phosphate site; these read AG and NT.

The protein belongs to the ThiG family. In terms of assembly, homotetramer. Forms heterodimers with either ThiH or ThiS.

The protein resides in the cytoplasm. It catalyses the reaction [ThiS sulfur-carrier protein]-C-terminal-Gly-aminoethanethioate + 2-iminoacetate + 1-deoxy-D-xylulose 5-phosphate = [ThiS sulfur-carrier protein]-C-terminal Gly-Gly + 2-[(2R,5Z)-2-carboxy-4-methylthiazol-5(2H)-ylidene]ethyl phosphate + 2 H2O + H(+). It participates in cofactor biosynthesis; thiamine diphosphate biosynthesis. Catalyzes the rearrangement of 1-deoxy-D-xylulose 5-phosphate (DXP) to produce the thiazole phosphate moiety of thiamine. Sulfur is provided by the thiocarboxylate moiety of the carrier protein ThiS. In vitro, sulfur can be provided by H(2)S. The sequence is that of Thiazole synthase from Bartonella tribocorum (strain CIP 105476 / IBS 506).